We begin with the raw amino-acid sequence, 75 residues long: U14-hexatoxin-Mg1a (75 aa).

An N-terminal signal peptide occupies residues 1–19 (MKLTLFILIVFVVLANVYA). Positions 20–31 (AGISERNIIGGR) are excised as a propeptide.

In terms of processing, contains 4 disulfide bonds. Expressed by the venom gland.

It is found in the secreted. Its function is as follows. No toxicity is observed upon intracranial injection into mice and intrathorax injection into crickets. This chain is U14-hexatoxin-Mg1a, found in Macrothele gigas (Japanese funnel web spider).